The primary structure comprises 172 residues: Shikimate kinase (172 aa).

14–19 (GAGKST) contacts ATP. S18 contacts Mg(2+). Substrate-binding residues include D36, R60, and G82. Residue R120 coordinates ATP. R139 is a substrate binding site. Q156 serves as a coordination point for ATP.

The protein belongs to the shikimate kinase family. As to quaternary structure, monomer. Requires Mg(2+) as cofactor.

It localises to the cytoplasm. It carries out the reaction shikimate + ATP = 3-phosphoshikimate + ADP + H(+). Its pathway is metabolic intermediate biosynthesis; chorismate biosynthesis; chorismate from D-erythrose 4-phosphate and phosphoenolpyruvate: step 5/7. Catalyzes the specific phosphorylation of the 3-hydroxyl group of shikimic acid using ATP as a cosubstrate. The chain is Shikimate kinase from Aliivibrio fischeri (strain ATCC 700601 / ES114) (Vibrio fischeri).